The chain runs to 378 residues: AA13 family lytic polysaccharide monooxygenase A (378 aa).

Positions M1–A17 are cleaved as a signal peptide. H18 is a binding site for Cu(2+). The residue at position 18 (H18) is a Methylhistidine. The Chitin-binding type-4 domain maps to H18 to I244. 7 cysteine pairs are disulfide-bonded: C39/C42, C65/C241, C101/C199, C117/C144, C152/C160, C166/C172, and C180/C188. H108 serves as a coordination point for Cu(2+). N-linked (GlcNAc...) asparagine glycosylation is present at N221. Residue Y238 participates in Cu(2+) binding. Residues D250–P263 show a composition bias toward low complexity. The segment at D250–A272 is disordered. The CBM20 domain occupies A272–K378.

This sequence belongs to the polysaccharide monooxygenase AA13 family. Cu(2+) is required as a cofactor. Post-translationally, O-mannosylated.

Its subcellular location is the secreted. It carries out the reaction starch + reduced acceptor + O2 = D-glucono-1,5-lactone-terminated malto-oligosaccharides + short-chain malto-oligosaccharides + acceptor + H2O.. Its activity is regulated as follows. Activity is inhibited by both beta-cyclodextrin or amylose that block the access to the active site. Starch-active lytic polysaccharide monooxygenase that oxidizes the C1 position of starch substrates. Catalysis by LPMOs requires the reduction of the active-site copper from Cu(II) to Cu(I) by a reducing agent and H(2)O(2) or O(2) as a cosubstrate. The polypeptide is AA13 family lytic polysaccharide monooxygenase A (Pyricularia oryzae (strain 70-15 / ATCC MYA-4617 / FGSC 8958) (Rice blast fungus)).